Here is a 77-residue protein sequence, read N- to C-terminus: DNA-directed RNA polymerase subunit omega (77 aa).

This sequence belongs to the RNA polymerase subunit omega family. In cyanobacteria the RNAP catalytic core is composed of 2 alpha, 1 beta, 1 beta', 1 gamma and 1 omega subunit. When a sigma factor is associated with the core the holoenzyme is formed, which can initiate transcription.

The catalysed reaction is RNA(n) + a ribonucleoside 5'-triphosphate = RNA(n+1) + diphosphate. Functionally, promotes RNA polymerase assembly. Latches the N- and C-terminal regions of the beta' subunit thereby facilitating its interaction with the beta and alpha subunits. This chain is DNA-directed RNA polymerase subunit omega, found in Thermosynechococcus vestitus (strain NIES-2133 / IAM M-273 / BP-1).